Reading from the N-terminus, the 187-residue chain is Adenylate kinase (187 aa).

Residue 10–15 (GSGKGT) coordinates ATP. Positions 30 to 59 (STGDMLRAEIAAGSELGKQAKAVMDAGNLV) are NMP. AMP is bound by residues threonine 31, arginine 36, 57–59 (NLV), 85–88 (GYPR), and glutamine 92. Positions 126 to 136 (GRAKEQGRADD) are LID. Arginine 127 is an ATP binding site. Residues arginine 133 and arginine 144 each contribute to the AMP site. Glycine 172 contributes to the ATP binding site.

This sequence belongs to the adenylate kinase family. In terms of assembly, monomer.

The protein resides in the cytoplasm. The catalysed reaction is AMP + ATP = 2 ADP. It participates in purine metabolism; AMP biosynthesis via salvage pathway; AMP from ADP: step 1/1. Catalyzes the reversible transfer of the terminal phosphate group between ATP and AMP. Plays an important role in cellular energy homeostasis and in adenine nucleotide metabolism. The protein is Adenylate kinase of Stenotrophomonas maltophilia (strain R551-3).